The sequence spans 953 residues: Serine-aspartate repeat-containing protein C (953 aa).

A signal peptide spans 1–50; it reads MNNKKTATNRKGMIPNRLNKFSIRKYSVGTASILVGTTLIFGLSGHEAKA. The interval 51 to 160 is disordered; that stretch reads AEHTNGELNQ…AKNVSTTPKT (110 aa). The ligand binding A region stretch occupies residues 51–495; the sequence is AEHTNGELNQ…GSSTANGDQK (445 aa). Positions 56–71 are enriched in polar residues; it reads GELNQSKNETTAPSEN. Positions 72–83 are enriched in basic and acidic residues; sequence KTTEKVDSRQLK. Residues 84 to 114 show a composition bias toward polar residues; it reads DNTQTATADQPKVTMSDSATVKETSSNMQSP. Low complexity predominate over residues 115 to 132; sequence QNATASQSTTQTSNVTTN. Polar residues predominate over residues 133–160; the sequence is DKSSTTYSNETDKSNLTQAKNVSTTPKT. CNA-B domains lie at 496 to 606 and 607 to 717; these read KYNL…YKTP and KYSL…EEET. Residues 678–933 are disordered; it reads TQTGTNTTED…NNSNNGTLFG (256 aa). 2 stretches are compositionally biased toward acidic residues: residues 685–695 and 712–892; these read TEDDKDADGGE and YYEE…DSDS. Positions 916-920 match the LPXTG sorting signal motif; the sequence is LPETG. The span at 918–933 shows a compositional bias: low complexity; that stretch reads ETGSENNNSNNGTLFG. Thr-919 is subject to Pentaglycyl murein peptidoglycan amidated threonine. The propeptide at 920 to 953 is removed by sortase; that stretch reads GSENNNSNNGTLFGGLFAALGSLLLFGRRKKQNK.

The protein belongs to the serine-aspartate repeat-containing protein (SDr) family. As to quaternary structure, homodimerizes; via N2-Domain. Interacts with host NRXN1; this interaction mediates bacterial attachment to host cells.

Its subcellular location is the secreted. The protein localises to the cell wall. In terms of biological role, cell surface-associated calcium-binding protein which plays an important role in adhesion and pathogenesis. Mediates interactions with components of the extracellular matrix such as host NRXN1 to promote bacterial adhesion. This Staphylococcus aureus (strain Mu50 / ATCC 700699) protein is Serine-aspartate repeat-containing protein C (sdrC).